The following is a 339-amino-acid chain: Isopentenyl-diphosphate delta-isomerase (339 aa).

Residue Arg7 to Lys8 coordinates substrate. FMN contacts are provided by residues Ser65, Ser66–Thr68, Ser96, and Asn125. Substrate is bound at residue Ser96–Arg98. Gln160 is a substrate binding site. Glu161 provides a ligand contact to Mg(2+). FMN is bound by residues Lys192, Thr222, and Ala293 to Gly294.

The protein belongs to the IPP isomerase type 2 family. In terms of assembly, homooctamer. Dimer of tetramers. FMN is required as a cofactor. It depends on NADPH as a cofactor. Requires Mg(2+) as cofactor.

The protein localises to the cytoplasm. It catalyses the reaction isopentenyl diphosphate = dimethylallyl diphosphate. Its function is as follows. Involved in the biosynthesis of isoprenoids. Catalyzes the 1,3-allylic rearrangement of the homoallylic substrate isopentenyl (IPP) to its allylic isomer, dimethylallyl diphosphate (DMAPP). In Vibrio parahaemolyticus serotype O3:K6 (strain RIMD 2210633), this protein is Isopentenyl-diphosphate delta-isomerase.